The sequence spans 142 residues: Transcription antitermination protein NusB (142 aa).

Belongs to the NusB family.

Involved in transcription antitermination. Required for transcription of ribosomal RNA (rRNA) genes. Binds specifically to the boxA antiterminator sequence of the ribosomal RNA (rrn) operons. The sequence is that of Transcription antitermination protein NusB from Thermotoga sp. (strain RQ2).